The sequence spans 128 residues: Small ribosomal subunit protein uS12 (128 aa).

Aspartate 89 carries the 3-methylthioaspartic acid modification. Positions 101 to 128 are disordered; sequence SLDTSGVADRRNGRSKYGAKRPKEGAKK.

Belongs to the universal ribosomal protein uS12 family. In terms of assembly, part of the 30S ribosomal subunit. Contacts proteins S8 and S17. May interact with IF1 in the 30S initiation complex.

Functionally, with S4 and S5 plays an important role in translational accuracy. Its function is as follows. Interacts with and stabilizes bases of the 16S rRNA that are involved in tRNA selection in the A site and with the mRNA backbone. Located at the interface of the 30S and 50S subunits, it traverses the body of the 30S subunit contacting proteins on the other side and probably holding the rRNA structure together. The combined cluster of proteins S8, S12 and S17 appears to hold together the shoulder and platform of the 30S subunit. The chain is Small ribosomal subunit protein uS12 from Chloroherpeton thalassium (strain ATCC 35110 / GB-78).